We begin with the raw amino-acid sequence, 565 residues long: Dihydroxy-acid dehydratase (565 aa).

Residue Cys50 participates in [2Fe-2S] cluster binding. Asp82 serves as a coordination point for Mg(2+). [2Fe-2S] cluster is bound at residue Cys123. Residues Asp124 and Lys125 each coordinate Mg(2+). Lys125 carries the post-translational modification N6-carboxylysine. Residue Cys195 coordinates [2Fe-2S] cluster. Glu447 lines the Mg(2+) pocket. Residue Ser473 is the Proton acceptor of the active site.

It belongs to the IlvD/Edd family. Homodimer. Requires [2Fe-2S] cluster as cofactor. Mg(2+) is required as a cofactor.

It catalyses the reaction (2R)-2,3-dihydroxy-3-methylbutanoate = 3-methyl-2-oxobutanoate + H2O. The enzyme catalyses (2R,3R)-2,3-dihydroxy-3-methylpentanoate = (S)-3-methyl-2-oxopentanoate + H2O. The protein operates within amino-acid biosynthesis; L-isoleucine biosynthesis; L-isoleucine from 2-oxobutanoate: step 3/4. It participates in amino-acid biosynthesis; L-valine biosynthesis; L-valine from pyruvate: step 3/4. Functions in the biosynthesis of branched-chain amino acids. Catalyzes the dehydration of (2R,3R)-2,3-dihydroxy-3-methylpentanoate (2,3-dihydroxy-3-methylvalerate) into 2-oxo-3-methylpentanoate (2-oxo-3-methylvalerate) and of (2R)-2,3-dihydroxy-3-methylbutanoate (2,3-dihydroxyisovalerate) into 2-oxo-3-methylbutanoate (2-oxoisovalerate), the penultimate precursor to L-isoleucine and L-valine, respectively. The chain is Dihydroxy-acid dehydratase from Halorhodospira halophila (strain DSM 244 / SL1) (Ectothiorhodospira halophila (strain DSM 244 / SL1)).